Here is a 148-residue protein sequence, read N- to C-terminus: Snaclec B1 (148 aa).

Positions 1–24 (MGRIIFVSFGLLVVFLSLSGTGAA) are cleaved as a signal peptide. Cystine bridges form between Cys-27-Cys-38, Cys-55-Cys-144, and Cys-121-Cys-136. One can recognise a C-type lectin domain in the interval 34–145 (YDQHCYKVFD…CRLLGHFVCK (112 aa)).

Belongs to the snaclec family. As to quaternary structure, heterodimer; disulfide-linked. In terms of tissue distribution, expressed by the venom gland.

It localises to the secreted. Interferes with one step of hemostasis (modulation of platelet aggregation, or coagulation cascade, for example). The polypeptide is Snaclec B1 (Macrovipera lebetinus (Levantine viper)).